Consider the following 513-residue polypeptide: Chromosomal replication initiator protein DnaA (513 aa).

The tract at residues 1-87 is domain I, interacts with DnaA modulators; sequence MSVELWQQCV…IGSKRSSAPR (87 aa). Residues 87 to 176 are domain II; that stretch reads RAAPNAPLAA…QVEGALKHTS (90 aa). Residues 113–163 form a disordered region; that stretch reads AAPAPAPAPTSAPAKKAAAQKAAEVSEEPSRDSFDPMAGASSQQAPVRAEQ. The segment covering 123 to 135 has biased composition (low complexity); that stretch reads SAPAKKAAAQKAA. The segment at 177–393 is domain III, AAA+ region; it reads YLNRTFTFEN…GALKRVIAHS (217 aa). Positions 221, 223, 224, and 225 each coordinate ATP. Positions 394-513 are domain IV, binds dsDNA; it reads HFMGRDITIE…YKNLLRTLTT (120 aa).

The protein belongs to the DnaA family. As to quaternary structure, oligomerizes as a right-handed, spiral filament on DNA at oriC.

Its subcellular location is the cytoplasm. Plays an essential role in the initiation and regulation of chromosomal replication. ATP-DnaA binds to the origin of replication (oriC) to initiate formation of the DNA replication initiation complex once per cell cycle. Binds the DnaA box (a 9 base pair repeat at the origin) and separates the double-stranded (ds)DNA. Forms a right-handed helical filament on oriC DNA; dsDNA binds to the exterior of the filament while single-stranded (ss)DNA is stabiized in the filament's interior. The ATP-DnaA-oriC complex binds and stabilizes one strand of the AT-rich DNA unwinding element (DUE), permitting loading of DNA polymerase. After initiation quickly degrades to an ADP-DnaA complex that is not apt for DNA replication. Binds acidic phospholipids. This chain is Chromosomal replication initiator protein DnaA, found in Pseudomonas fluorescens (strain ATCC BAA-477 / NRRL B-23932 / Pf-5).